Reading from the N-terminus, the 541-residue chain is Berberine bridge enzyme-like 24 (541 aa).

Residues 1-32 form the signal peptide; it reads MGNSKPLPTISCIIVSVLYFSFYCITPTSSSA. Residues Cys41 and Cys105 are joined by a disulfide bond. N-linked (GlcNAc...) asparagine glycosylation is present at Asn62. In terms of domain architecture, FAD-binding PCMH-type spans 83–259; it reads SMPKPGFIFR…LAWKIKLVPV (177 aa). The segment at residues 120–184 is a cross-link (6-(S-cysteinyl)-8alpha-(pros-histidyl)-FAD (His-Cys)); sequence HDFEALSYVS…KIHGFPAGLC (65 aa). Asn309, Asn408, and Asn435 each carry an N-linked (GlcNAc...) asparagine glycan.

It belongs to the oxygen-dependent FAD-linked oxidoreductase family. The cofactor is FAD. The FAD cofactor is bound via a bicovalent 6-S-cysteinyl, 8alpha-N1-histidyl FAD linkage.

It localises to the secreted. Its subcellular location is the cell wall. This is Berberine bridge enzyme-like 24 from Arabidopsis thaliana (Mouse-ear cress).